The following is a 192-amino-acid chain: MKLIAAVLAGGKSRRFGEDKLLFEINGKPLILHTIDRLEKCNLIKRVVIVASSHNEKVMREFGYEVIVDELEIGPISGLYSALSLGEVLVVGGDMPSLIPEFIDYIIKEFNNSRKIACVPRWSNGYLEPLHAAYSREFREILGERIRKGKYKLGDAIREIPNVCYISIEKLPVEWRESFFNVNRKEDLHIIT.

GTP contacts are provided by residues leucine 8–glycine 10, lysine 20, aspartate 69, and aspartate 94. Aspartate 94 contributes to the Mg(2+) binding site.

Belongs to the MobA family. The cofactor is Mg(2+).

It localises to the cytoplasm. The catalysed reaction is Mo-molybdopterin + GTP + H(+) = Mo-molybdopterin guanine dinucleotide + diphosphate. Its function is as follows. Transfers a GMP moiety from GTP to Mo-molybdopterin (Mo-MPT) cofactor (Moco or molybdenum cofactor) to form Mo-molybdopterin guanine dinucleotide (Mo-MGD) cofactor. The sequence is that of Probable molybdenum cofactor guanylyltransferase from Pyrococcus horikoshii (strain ATCC 700860 / DSM 12428 / JCM 9974 / NBRC 100139 / OT-3).